The sequence spans 107 residues: Nucleoid-associated protein RC1_2305 (107 aa).

It belongs to the YbaB/EbfC family. Homodimer.

It is found in the cytoplasm. The protein resides in the nucleoid. Functionally, binds to DNA and alters its conformation. May be involved in regulation of gene expression, nucleoid organization and DNA protection. In Rhodospirillum centenum (strain ATCC 51521 / SW), this protein is Nucleoid-associated protein RC1_2305.